The sequence spans 325 residues: Probable tRNA-dihydrouridine synthase 2 (325 aa).

18–20 is a binding site for FMN; sequence PME. Cys-105 acts as the Proton donor in catalysis. FMN contacts are provided by residues Lys-143, 208–210, and 232–233; these read NGD and GR.

It belongs to the Dus family. The cofactor is FMN.

The enzyme catalyses a 5,6-dihydrouridine in tRNA + NAD(+) = a uridine in tRNA + NADH + H(+). It carries out the reaction a 5,6-dihydrouridine in tRNA + NADP(+) = a uridine in tRNA + NADPH + H(+). Catalyzes the synthesis of 5,6-dihydrouridine (D), a modified base found in the D-loop of most tRNAs, via the reduction of the C5-C6 double bond in target uridines. This is Probable tRNA-dihydrouridine synthase 2 (dus2) from Bacillus subtilis (strain 168).